A 259-amino-acid polypeptide reads, in one-letter code: MLIVVSPAKTLDYDSPLATQTYTLPELTDHSSELMKVCRELTPMDIASLMKVSDKIAGLNAARFAEWQPEFTTENARQAILAFKGDVYTGLAAETMTEEDFAYTQQHLRMLSGLYGLLRPLDLMQPYRLEMGTKLANPRGANLYQFWGSVITEKLNAALAEQGDNILINLASNEYFKSVKPKSLDAQLITPVFKDCKNGNYKVISFYAKKARGMMARYIIDNRIKSVDELKQFDVAGYYFVPAESTRKEFVFKREEQVK.

It belongs to the UPF0246 family.

The protein is UPF0246 protein PBPRA0561 of Photobacterium profundum (strain SS9).